A 793-amino-acid polypeptide reads, in one-letter code: Phosphoribosylformylglycinamidine synthase subunit PurL (793 aa).

The active site involves histidine 53. Residues tyrosine 56 and lysine 95 each coordinate ATP. Position 97 (glutamate 97) interacts with Mg(2+). Substrate-binding positions include 98–101 (SHNH) and arginine 120. Catalysis depends on histidine 99, which acts as the Proton acceptor. Aspartate 121 serves as a coordination point for Mg(2+). Glutamine 244 provides a ligand contact to substrate. Position 272 (aspartate 272) interacts with Mg(2+). 316–318 (ESQ) is a binding site for substrate. The ATP site is built by aspartate 523 and glycine 560. Mg(2+) is bound at residue asparagine 561. Serine 563 is a binding site for substrate.

It belongs to the FGAMS family. As to quaternary structure, monomer. Part of the FGAM synthase complex composed of 1 PurL, 1 PurQ and 2 PurS subunits.

Its subcellular location is the cytoplasm. It carries out the reaction N(2)-formyl-N(1)-(5-phospho-beta-D-ribosyl)glycinamide + L-glutamine + ATP + H2O = 2-formamido-N(1)-(5-O-phospho-beta-D-ribosyl)acetamidine + L-glutamate + ADP + phosphate + H(+). The protein operates within purine metabolism; IMP biosynthesis via de novo pathway; 5-amino-1-(5-phospho-D-ribosyl)imidazole from N(2)-formyl-N(1)-(5-phospho-D-ribosyl)glycinamide: step 1/2. Its function is as follows. Part of the phosphoribosylformylglycinamidine synthase complex involved in the purines biosynthetic pathway. Catalyzes the ATP-dependent conversion of formylglycinamide ribonucleotide (FGAR) and glutamine to yield formylglycinamidine ribonucleotide (FGAM) and glutamate. The FGAM synthase complex is composed of three subunits. PurQ produces an ammonia molecule by converting glutamine to glutamate. PurL transfers the ammonia molecule to FGAR to form FGAM in an ATP-dependent manner. PurS interacts with PurQ and PurL and is thought to assist in the transfer of the ammonia molecule from PurQ to PurL. The polypeptide is Phosphoribosylformylglycinamidine synthase subunit PurL (Prochlorococcus marinus (strain SARG / CCMP1375 / SS120)).